The sequence spans 287 residues: Nuclease S1 (287 aa).

Residues methionine 1–glycine 20 form the signal peptide. Tryptophan 21, histidine 26, aspartate 65, and histidine 80 together coordinate a divalent metal cation. Substrate-binding positions include tryptophan 21–histidine 26, aspartate 65–aspartate 71, histidine 80–aspartate 83, and glycine 93–arginine 98. 2 cysteine pairs are disulfide-bonded: cysteine 92/cysteine 236 and cysteine 100/cysteine 105. Residues asparagine 112 and asparagine 122 are each glycosylated (N-linked (GlcNAc...) asparagine). Positions 135, 139, 145, 168, and 172 each coordinate a divalent metal cation. The substrate binding stretch occupies residues histidine 135–tyrosine 183. An N-linked (GlcNAc...) asparagine glycan is attached at asparagine 248.

Belongs to the nuclease type I family. As to quaternary structure, monomer. The cofactor is Zn(2+).

The catalysed reaction is Endonucleolytic cleavage to 5'-phosphomononucleotide and 5'-phosphooligonucleotide end-products.. Inhibited by inorganic phosphate (Pi). Functionally, hydrolyzes only single-stranded DNA and RNA without apparent specificity for bases. This is Nuclease S1 from Aspergillus oryzae (strain ATCC 42149 / RIB 40) (Yellow koji mold).